The primary structure comprises 556 residues: Formate--tetrahydrofolate ligase (556 aa).

65-72 (TSAGEGKT) contributes to the ATP binding site.

This sequence belongs to the formate--tetrahydrofolate ligase family.

The enzyme catalyses (6S)-5,6,7,8-tetrahydrofolate + formate + ATP = (6R)-10-formyltetrahydrofolate + ADP + phosphate. It participates in one-carbon metabolism; tetrahydrofolate interconversion. This Kosmotoga olearia (strain ATCC BAA-1733 / DSM 21960 / TBF 19.5.1) protein is Formate--tetrahydrofolate ligase.